Here is a 1070-residue protein sequence, read N- to C-terminus: DNA-directed RNA polymerase subunit beta (1070 aa).

It belongs to the RNA polymerase beta chain family. As to quaternary structure, in plastids the minimal PEP RNA polymerase catalytic core is composed of four subunits: alpha, beta, beta', and beta''. When a (nuclear-encoded) sigma factor is associated with the core the holoenzyme is formed, which can initiate transcription.

It localises to the plastid. Its subcellular location is the chloroplast. It catalyses the reaction RNA(n) + a ribonucleoside 5'-triphosphate = RNA(n+1) + diphosphate. DNA-dependent RNA polymerase catalyzes the transcription of DNA into RNA using the four ribonucleoside triphosphates as substrates. The chain is DNA-directed RNA polymerase subunit beta from Gossypium hirsutum (Upland cotton).